Reading from the N-terminus, the 322-residue chain is Homoserine kinase (322 aa).

A106–A116 serves as a coordination point for ATP.

This sequence belongs to the GHMP kinase family. Homoserine kinase subfamily.

The protein localises to the cytoplasm. It catalyses the reaction L-homoserine + ATP = O-phospho-L-homoserine + ADP + H(+). The protein operates within amino-acid biosynthesis; L-threonine biosynthesis; L-threonine from L-aspartate: step 4/5. Its function is as follows. Catalyzes the ATP-dependent phosphorylation of L-homoserine to L-homoserine phosphate. The chain is Homoserine kinase from Xanthomonas campestris pv. campestris (strain B100).